The primary structure comprises 597 residues: Probable translation initiation factor IF-2 (597 aa).

In terms of domain architecture, tr-type G spans Ile-4–Leu-221. A G1 region spans residues Gly-13–Thr-20. GTP is bound at residue Gly-13–Thr-20. Residues Gly-38 to His-42 are G2. The tract at residues Asp-77–Gly-80 is G3. Residues Asp-77–His-81 and Asn-131–Asp-134 contribute to the GTP site. Residues Asn-131–Asp-134 are G4. A G5 region spans residues Ser-199–Lys-201.

The protein belongs to the TRAFAC class translation factor GTPase superfamily. Classic translation factor GTPase family. IF-2 subfamily.

Its function is as follows. Function in general translation initiation by promoting the binding of the formylmethionine-tRNA to ribosomes. Seems to function along with eIF-2. The sequence is that of Probable translation initiation factor IF-2 from Thermococcus sibiricus (strain DSM 12597 / MM 739).